Consider the following 353-residue polypeptide: MTIALGRFTKDEKDLFDIMDDWLRRDRFVFVGWSGLLLFPCAYFALGGWFTGTTFVTSWYTHGLASSYLEGCNFLTAAVSTPANSLAHSLLLLWGPEAQGDFTRWCQLGGLWTFVALHGAFGLIGFMLRQFELARSVQLRPYNAIAFSGPIAVFVSVFLIYPLGQSGWFFAPSFGVAAIFRFILFFQGFHNWTLNPFHMMGVAGVLGAALLCAIHGATVENTLFEDGDGANTFRAFNPTQAEETYSMVTANRFWSQIFGVAFSNKRWLHFFMLFVPVTGLWMSALGVVGLALNLRAYDFVSQEIRAAEDPEFETFYTKNILLNEGIRAWMAAQDQPHENLIFPEEVLPRGNAL.

The residue at position 2 (T2) is an N-acetylthreonine. At T2 the chain carries Phosphothreonine. Residues 41-61 traverse the membrane as a helical segment; it reads CAYFALGGWFTGTTFVTSWYT. H118 contributes to the chlorophyll a binding site. A helical membrane pass occupies residues 125 to 141; that stretch reads GFMLRQFELARSVQLRP. Q130 and N143 together coordinate pheophytin a. Residues 153 to 166 traverse the membrane as a helical segment; that stretch reads VFVSVFLIYPLGQS. H198 contributes to the chlorophyll a binding site. Residues 208–228 form a helical membrane-spanning segment; the sequence is AALLCAIHGATVENTLFEDGD. A plastoquinone-binding residues include H215 and F262. Residue H215 participates in Fe cation binding. H269 is a Fe cation binding site. The helical transmembrane segment at 279-295 threads the bilayer; it reads GLWMSALGVVGLALNLR.

The protein belongs to the reaction center PufL/M/PsbA/D family. PSII is composed of 1 copy each of membrane proteins PsbA, PsbB, PsbC, PsbD, PsbE, PsbF, PsbH, PsbI, PsbJ, PsbK, PsbL, PsbM, PsbT, PsbX, PsbY, PsbZ, Psb30/Ycf12, at least 3 peripheral proteins of the oxygen-evolving complex and a large number of cofactors. It forms dimeric complexes. The D1/D2 heterodimer binds P680, chlorophylls that are the primary electron donor of PSII, and subsequent electron acceptors. It shares a non-heme iron and each subunit binds pheophytin, quinone, additional chlorophylls, carotenoids and lipids. There is also a Cl(-1) ion associated with D1 and D2, which is required for oxygen evolution. The PSII complex binds additional chlorophylls, carotenoids and specific lipids. serves as cofactor.

It is found in the plastid. Its subcellular location is the chloroplast thylakoid membrane. It carries out the reaction 2 a plastoquinone + 4 hnu + 2 H2O = 2 a plastoquinol + O2. Functionally, photosystem II (PSII) is a light-driven water:plastoquinone oxidoreductase that uses light energy to abstract electrons from H(2)O, generating O(2) and a proton gradient subsequently used for ATP formation. It consists of a core antenna complex that captures photons, and an electron transfer chain that converts photonic excitation into a charge separation. The D1/D2 (PsbA/PsbD) reaction center heterodimer binds P680, the primary electron donor of PSII as well as several subsequent electron acceptors. D2 is needed for assembly of a stable PSII complex. This is Photosystem II D2 protein from Nandina domestica (Heavenly bamboo).